The chain runs to 310 residues: MGIFSRLQSLFNVFMTTDTHYVGRFAPSPSGPLHFGSLIAALGSYLQARSQQGKWLVRIEDLDPPREIRGAADDILRTLEAYGLTWDGSVMYQSQRHGAYQDQIDQWLHGGDAYYCQCTRKQIKTAGGFYPGTCRHLHRSAENSAVRLNVDTPITYFVDRLHGQIDIPATLAQEDFIIRRRDGLYAYNLAVVLDDIEQNITEVVRGADLIEPTGRQIGLYRQLQHPEVSYLHLPLAVTDNGNKLSKQNHAPAIDKSHPVPALIAAMSFLGMTPPATLIKEELKDVLQWGINAWCIDNLPKMTEIILTKTH.

L-glutamate is bound by residues 24 to 28 (RFAPS) and Glu-60. The 'HIGH' region motif lies at 27 to 37 (PSPSGPLHFGS). The Zn(2+) site is built by Cys-116, Cys-118, Tyr-130, and Cys-134. Positions 187 and 205 each coordinate L-glutamate. The 'KMSKS' region motif lies at 243–247 (KLSKQ). Position 246 (Lys-246) interacts with ATP.

This sequence belongs to the class-I aminoacyl-tRNA synthetase family. GluQ subfamily. Requires Zn(2+) as cofactor.

Functionally, catalyzes the tRNA-independent activation of glutamate in presence of ATP and the subsequent transfer of glutamate onto a tRNA(Asp). Glutamate is transferred on the 2-amino-5-(4,5-dihydroxy-2-cyclopenten-1-yl) moiety of the queuosine in the wobble position of the QUC anticodon. The protein is Glutamyl-Q tRNA(Asp) synthetase of Photobacterium profundum (strain SS9).